Here is a 163-residue protein sequence, read N- to C-terminus: Bacterial microcompartment assembly protein PduM (163 aa).

Belongs to the PduM family. In terms of assembly, interacts with shell protein PduK.

The protein resides in the bacterial microcompartment. Its pathway is polyol metabolism; 1,2-propanediol degradation. In terms of biological role, plays an essential role in assembly and/or stability of the bacterial microcompartment (BMC) dedicated to 1,2-propanediol (1,2-PD) degradation. Functionally, expression of a cosmid containing the full 21-gene pdu operon in E.coli allows E.coli to grow on 1,2-propanediol (1,2-PD) with the appearance of bacterial microcompartments (BMC) in its cytoplasm. The 1,2-PD-specific bacterial microcompartment (BMC) concentrates low levels of 1,2-PD catabolic enzymes, concentrates volatile reaction intermediates thus enhancing pathway flux and keeps the level of toxic, mutagenic propionaldehyde low. The polypeptide is Bacterial microcompartment assembly protein PduM (Citrobacter freundii).